The chain runs to 908 residues: NADH-quinone oxidoreductase subunit G (908 aa).

Positions 2–83 constitute a 2Fe-2S ferredoxin-type domain; it reads ATIHVDGKEY…GTFISIDDEE (82 aa). [2Fe-2S] cluster-binding residues include cysteine 34, cysteine 45, cysteine 48, and cysteine 67. Residues 83 to 122 enclose the 4Fe-4S His(Cys)3-ligated-type domain; sequence EAKQFRESVVEWLMTNHPHDCPVCEEGGNCHLQDMTVMTG. The [4Fe-4S] cluster site is built by histidine 99, cysteine 103, cysteine 106, cysteine 112, cysteine 151, cysteine 154, cysteine 157, cysteine 201, cysteine 228, cysteine 231, cysteine 235, and cysteine 263. The 57-residue stretch at 221 to 277 folds into the 4Fe-4S Mo/W bis-MGD-type domain; the sequence is MQFAPSICQQCSIGCNISPGERYGELRRIENRYNGTVNHYFLCDRGRFGYGYVNLKD.

It belongs to the complex I 75 kDa subunit family. As to quaternary structure, composed of 13 different subunits. Subunits NuoCD, E, F, and G constitute the peripheral sector of the complex. The cofactor is [2Fe-2S] cluster. [4Fe-4S] cluster is required as a cofactor.

The enzyme catalyses a quinone + NADH + 5 H(+)(in) = a quinol + NAD(+) + 4 H(+)(out). Its function is as follows. NDH-1 shuttles electrons from NADH, via FMN and iron-sulfur (Fe-S) centers, to quinones in the respiratory chain. The immediate electron acceptor for the enzyme in this species is believed to be ubiquinone. Couples the redox reaction to proton translocation (for every two electrons transferred, four hydrogen ions are translocated across the cytoplasmic membrane), and thus conserves the redox energy in a proton gradient. The chain is NADH-quinone oxidoreductase subunit G (nuoG) from Escherichia coli O157:H7.